The primary structure comprises 747 residues: ATPase family gene 2 protein homolog B (747 aa).

An N-acetylmethionine modification is found at Met-1. ATP contacts are provided by residues 234-241 (GPPGVGKT) and 500-507 (GPPGCAKT).

The protein belongs to the AAA ATPase family. AFG2 subfamily. In terms of assembly, part of the 55LCC heterohexameric ATPase complex composed at least of AIRIM, AFG2A, AFG2B and CINP. Associates with pre-60S ribosomal particles. As to expression, in adult ear, expressed at low levels in neurosensory hair cells (inner and outer) and supporting cells (pillar and Deiter cells).

It is found in the cytoplasm. The protein resides in the cytoskeleton. It localises to the spindle. Its subcellular location is the nucleus. It carries out the reaction ATP + H2O = ADP + phosphate + H(+). Its activity is regulated as follows. In the context of 55LCC heterohexameric ATPase complex, the ATPase activity is stimulated by DNA binding and inhibited in presence of RNA. Functionally, ATP-dependent chaperone part of the 55LCC heterohexameric ATPase complex which is chromatin-associated and promotes replisome proteostasis to maintain replication fork progression and genome stability. Required for replication fork progression, sister chromatid cohesion, and chromosome stability. The ATPase activity is specifically enhanced by replication fork DNA and is coupled to cysteine protease-dependent cleavage of replisome substrates in response to replication fork damage. Uses ATPase activity to process replisome substrates in S-phase, facilitating their proteolytic turnover from chromatin to ensure DNA replication and mitotic fidelity. Plays an essential role in the cytoplasmic maturation steps of pre-60S ribosomal particles by promoting the release of shuttling protein RSL24D1/RLP24 from the pre-ribosomal particles. In Mus musculus (Mouse), this protein is ATPase family gene 2 protein homolog B (Afg2b).